The chain runs to 184 residues: NADH-quinone oxidoreductase subunit B (184 aa).

4 residues coordinate [4Fe-4S] cluster: Cys37, Cys38, Cys103, and Cys132.

The protein belongs to the complex I 20 kDa subunit family. NDH-1 is composed of 14 different subunits. Subunits NuoB, C, D, E, F, and G constitute the peripheral sector of the complex. The cofactor is [4Fe-4S] cluster.

Its subcellular location is the cell membrane. It catalyses the reaction a quinone + NADH + 5 H(+)(in) = a quinol + NAD(+) + 4 H(+)(out). Functionally, NDH-1 shuttles electrons from NADH, via FMN and iron-sulfur (Fe-S) centers, to quinones in the respiratory chain. The immediate electron acceptor for the enzyme in this species is believed to be a menaquinone. Couples the redox reaction to proton translocation (for every two electrons transferred, four hydrogen ions are translocated across the cytoplasmic membrane), and thus conserves the redox energy in a proton gradient. The sequence is that of NADH-quinone oxidoreductase subunit B from Nocardia farcinica (strain IFM 10152).